The chain runs to 441 residues: Histidinol dehydrogenase (441 aa).

Residues Tyr-136, Gln-197, and Asn-220 each contribute to the NAD(+) site. Ser-243, Gln-265, and His-268 together coordinate substrate. 2 residues coordinate Zn(2+): Gln-265 and His-268. Catalysis depends on proton acceptor residues Glu-333 and His-334. His-334, Asp-367, Glu-421, and His-426 together coordinate substrate. Asp-367 is a Zn(2+) binding site. A Zn(2+)-binding site is contributed by His-426.

It belongs to the histidinol dehydrogenase family. It depends on Zn(2+) as a cofactor.

The catalysed reaction is L-histidinol + 2 NAD(+) + H2O = L-histidine + 2 NADH + 3 H(+). It participates in amino-acid biosynthesis; L-histidine biosynthesis; L-histidine from 5-phospho-alpha-D-ribose 1-diphosphate: step 9/9. Catalyzes the sequential NAD-dependent oxidations of L-histidinol to L-histidinaldehyde and then to L-histidine. The sequence is that of Histidinol dehydrogenase from Pseudomonas putida (strain ATCC 47054 / DSM 6125 / CFBP 8728 / NCIMB 11950 / KT2440).